A 125-amino-acid chain; its full sequence is MLWQGKSIRKVTGGRYAPLRGKRRTEIGKAPAETHIGVDRKKMVRTFGGNVKVRALRATFASVANRSTGVCKQVKIETVEENSANPNYVRRNLLTKGAIIRTELGRARIMSRPGQDGVINAVLVE.

This sequence belongs to the eukaryotic ribosomal protein eS8 family. In terms of assembly, part of the 30S ribosomal subunit.

In Methanosphaerula palustris (strain ATCC BAA-1556 / DSM 19958 / E1-9c), this protein is Small ribosomal subunit protein eS8.